The primary structure comprises 179 residues: MSRIGKLPIDISKDVKLAFSDSILSVQGPLGKLSRRIMPCVNLEITDSCIIVMRNDESGTARSAHGLTRTLVSNMVNGVTKGFQKSLEINGVGYRAEVKGSELVLSLGYSHPVVFTIPAGVTIEVDKLTKVVVKGFDKELVGETAAKIRSFRPPEPYKGKGVKYADETILRKAGKTGKK.

The protein belongs to the universal ribosomal protein uL6 family. Part of the 50S ribosomal subunit.

Its function is as follows. This protein binds to the 23S rRNA, and is important in its secondary structure. It is located near the subunit interface in the base of the L7/L12 stalk, and near the tRNA binding site of the peptidyltransferase center. This chain is Large ribosomal subunit protein uL6, found in Pelobacter propionicus (strain DSM 2379 / NBRC 103807 / OttBd1).